The sequence spans 287 residues: Probable endonuclease 4 (287 aa).

Residues histidine 69, histidine 109, glutamate 144, aspartate 178, histidine 181, histidine 215, aspartate 228, histidine 230, and glutamate 260 each coordinate Zn(2+).

This sequence belongs to the AP endonuclease 2 family. Requires Zn(2+) as cofactor.

The catalysed reaction is Endonucleolytic cleavage to 5'-phosphooligonucleotide end-products.. Endonuclease IV plays a role in DNA repair. It cleaves phosphodiester bonds at apurinic or apyrimidinic (AP) sites, generating a 3'-hydroxyl group and a 5'-terminal sugar phosphate. The polypeptide is Probable endonuclease 4 (Thermotoga maritima (strain ATCC 43589 / DSM 3109 / JCM 10099 / NBRC 100826 / MSB8)).